Consider the following 834-residue polypeptide: DNA polymerase I, thermostable (834 aa).

Residues arginine 176–glutamine 262 form the 5'-3' exonuclease domain. The interval glutamate 412–glycine 834 is polymerase.

This sequence belongs to the DNA polymerase type-A family.

It catalyses the reaction DNA(n) + a 2'-deoxyribonucleoside 5'-triphosphate = DNA(n+1) + diphosphate. Functionally, in addition to polymerase activity, this DNA polymerase exhibits 5'-3' exonuclease activity. In Thermus thermophilus (strain ATCC 27634 / DSM 579 / HB8), this protein is DNA polymerase I, thermostable (polA).